A 333-amino-acid chain; its full sequence is Ribosomal protein L11 methyltransferase (333 aa).

Residues Thr-181, Gly-202, Asp-224, and Asn-268 each contribute to the S-adenosyl-L-methionine site.

It belongs to the methyltransferase superfamily. PrmA family.

The protein resides in the cytoplasm. It catalyses the reaction L-lysyl-[protein] + 3 S-adenosyl-L-methionine = N(6),N(6),N(6)-trimethyl-L-lysyl-[protein] + 3 S-adenosyl-L-homocysteine + 3 H(+). In terms of biological role, methylates ribosomal protein L11. This chain is Ribosomal protein L11 methyltransferase, found in Helicobacter pylori (strain ATCC 700392 / 26695) (Campylobacter pylori).